The primary structure comprises 211 residues: ATP phosphoribosyltransferase (211 aa).

Belongs to the ATP phosphoribosyltransferase family. Short subfamily. As to quaternary structure, heteromultimer composed of HisG and HisZ subunits.

It localises to the cytoplasm. It catalyses the reaction 1-(5-phospho-beta-D-ribosyl)-ATP + diphosphate = 5-phospho-alpha-D-ribose 1-diphosphate + ATP. It functions in the pathway amino-acid biosynthesis; L-histidine biosynthesis; L-histidine from 5-phospho-alpha-D-ribose 1-diphosphate: step 1/9. Catalyzes the condensation of ATP and 5-phosphoribose 1-diphosphate to form N'-(5'-phosphoribosyl)-ATP (PR-ATP). Has a crucial role in the pathway because the rate of histidine biosynthesis seems to be controlled primarily by regulation of HisG enzymatic activity. The polypeptide is ATP phosphoribosyltransferase (Bacillus cereus (strain AH187)).